The sequence spans 345 residues: S-adenosylmethionine:tRNA ribosyltransferase-isomerase (345 aa).

It belongs to the QueA family. In terms of assembly, monomer.

The protein localises to the cytoplasm. It catalyses the reaction 7-aminomethyl-7-carbaguanosine(34) in tRNA + S-adenosyl-L-methionine = epoxyqueuosine(34) in tRNA + adenine + L-methionine + 2 H(+). The protein operates within tRNA modification; tRNA-queuosine biosynthesis. Functionally, transfers and isomerizes the ribose moiety from AdoMet to the 7-aminomethyl group of 7-deazaguanine (preQ1-tRNA) to give epoxyqueuosine (oQ-tRNA). In Shewanella sp. (strain W3-18-1), this protein is S-adenosylmethionine:tRNA ribosyltransferase-isomerase.